Here is a 330-residue protein sequence, read N- to C-terminus: Protein ANTHESIS POMOTING FACTOR 1 (330 aa).

6 WD repeats span residues 22 to 61 (DFGGKIHSVGFHRTDDLLVTSSEDDSLRLFDIANAKQLKI), 112 to 151 (GHKDRVVSLCMSPINDSFMSGSLDRSVRLWDLRVNACQGI), 153 to 191 (HLRGRPAVAYDQQGLVFAIAMEGGAVKLFDSRCYDKGPF), 198 to 237 (GDTAEVNDIKFSNDGKSMLLTTTNNNIYVLDAYRGEKKCG), 242 to 281 (PSQGTPIEATFTPDGKYVLSGSGDGTLHAWNIENPSEVAR), and 284 to 323 (NNIGVVSCLKWAPRRAMFVAASTVLTFWIPNDGESPAPAD).

Belongs to the WD repeat SWD2 family. In terms of tissue distribution, expressed in the shoot apical meristem (SAM), embryos, seedlings, cotyledons, leaves primordia, young leaves and roots.

The protein resides in the nucleus. Its function is as follows. Component of a chromatin regulatory complex involved in regulating chromatin structure in the nucleus. Promotes flowering under long days (LD) via the regulation of bolting. This is Protein ANTHESIS POMOTING FACTOR 1 from Arabidopsis thaliana (Mouse-ear cress).